A 581-amino-acid chain; its full sequence is Proline--tRNA ligase (581 aa).

The protein belongs to the class-II aminoacyl-tRNA synthetase family. ProS type 1 subfamily. In terms of assembly, homodimer.

The protein resides in the cytoplasm. The enzyme catalyses tRNA(Pro) + L-proline + ATP = L-prolyl-tRNA(Pro) + AMP + diphosphate. Catalyzes the attachment of proline to tRNA(Pro) in a two-step reaction: proline is first activated by ATP to form Pro-AMP and then transferred to the acceptor end of tRNA(Pro). As ProRS can inadvertently accommodate and process non-cognate amino acids such as alanine and cysteine, to avoid such errors it has two additional distinct editing activities against alanine. One activity is designated as 'pretransfer' editing and involves the tRNA(Pro)-independent hydrolysis of activated Ala-AMP. The other activity is designated 'posttransfer' editing and involves deacylation of mischarged Ala-tRNA(Pro). The misacylated Cys-tRNA(Pro) is not edited by ProRS. In Verminephrobacter eiseniae (strain EF01-2), this protein is Proline--tRNA ligase.